Reading from the N-terminus, the 423-residue chain is Glucose-1-phosphate adenylyltransferase (423 aa).

Alpha-D-glucose 1-phosphate contacts are provided by residues Tyr-108, Gly-173, 188-189, and Ser-207; that span reads EK.

It belongs to the bacterial/plant glucose-1-phosphate adenylyltransferase family. As to quaternary structure, homotetramer.

The enzyme catalyses alpha-D-glucose 1-phosphate + ATP + H(+) = ADP-alpha-D-glucose + diphosphate. It participates in glycan biosynthesis; glycogen biosynthesis. Involved in the biosynthesis of ADP-glucose, a building block required for the elongation reactions to produce glycogen. Catalyzes the reaction between ATP and alpha-D-glucose 1-phosphate (G1P) to produce pyrophosphate and ADP-Glc. This Francisella tularensis subsp. tularensis (strain WY96-3418) protein is Glucose-1-phosphate adenylyltransferase.